A 967-amino-acid chain; its full sequence is Alanine--tRNA ligase, cytoplasmic (967 aa).

His605, His609, Cys724, and His728 together coordinate Zn(2+).

It belongs to the class-II aminoacyl-tRNA synthetase family. As to quaternary structure, monomer. It depends on Zn(2+) as a cofactor. The N-terminus is blocked.

The protein localises to the cytoplasm. It carries out the reaction tRNA(Ala) + L-alanine + ATP = L-alanyl-tRNA(Ala) + AMP + diphosphate. In terms of biological role, catalyzes the attachment of alanine to tRNA(Ala) in a two-step reaction: alanine is first activated by ATP to form Ala-AMP and then transferred to the acceptor end of tRNA(Ala). Also edits incorrectly charged tRNA(Ala) via its editing domain. The chain is Alanine--tRNA ligase, cytoplasmic from Bombyx mori (Silk moth).